A 109-amino-acid chain; its full sequence is Large ribosomal subunit protein uL24 (109 aa).

Belongs to the universal ribosomal protein uL24 family. Part of the 50S ribosomal subunit.

Functionally, one of two assembly initiator proteins, it binds directly to the 5'-end of the 23S rRNA, where it nucleates assembly of the 50S subunit. One of the proteins that surrounds the polypeptide exit tunnel on the outside of the subunit. The sequence is that of Large ribosomal subunit protein uL24 from Rickettsia massiliae (strain Mtu5).